Consider the following 1181-residue polypeptide: Integrin alpha-2 (1181 aa).

Residues Met-1–Ala-29 form the signal peptide. Over Tyr-30–Thr-1132 the chain is Extracellular. FG-GAP repeat units follow at residues Leu-34–Cys-92 and Thr-101–Ser-161. A disulfide bridge connects residues Cys-83 and Cys-92. 3 N-linked (GlcNAc...) asparagine glycosylation sites follow: Asn-105, Asn-112, and Asn-343. One can recognise a VWFA domain in the interval Trp-188 to Glu-365. 5 FG-GAP repeats span residues Gly-366–Pro-420, Ala-423–Asn-475, Thr-477–Gln-539, His-540–Thr-598, and Gln-602–Glu-664. Residues Asn-432, Asn-460, and Asn-475 are each glycosylated (N-linked (GlcNAc...) asparagine). Positions 499, 501, 503, 507, 563, 565, 567, 571, 627, 629, 631, and 635 each coordinate Ca(2+). 5 disulfide bridges follow: Cys-680–Cys-737, Cys-789–Cys-795, Cys-865–Cys-876, Cys-1019–Cys-1050, and Cys-1055–Cys-1060. A glycan (N-linked (GlcNAc...) asparagine) is linked at Asn-699. N-linked (GlcNAc...) asparagine glycosylation is found at Asn-1057, Asn-1074, and Asn-1081. Residues Gly-1133–Trp-1154 form a helical membrane-spanning segment. The tract at residues Lys-1155–Arg-1161 is interaction with HPS5. Topologically, residues Lys-1155–Ser-1181 are cytoplasmic. The GFFKR motif signature appears at Gly-1157 to Arg-1161.

It belongs to the integrin alpha chain family. As to quaternary structure, heterodimer of an alpha and a beta subunit. Alpha-2 associates with beta-1. Interacts with HPS5 and RAB21. In terms of assembly, (Microbial infection) Integrin ITGA2:ITGB1 interacts (via ITAG2 I-domain) with rotavirus A VP4 protein. (Microbial infection) Integrin ITGA2:ITGB1 interacts with human echoviruses 1 and 8 capsid proteins.

It is found in the membrane. Its function is as follows. Integrin alpha-2/beta-1 is a receptor for laminin, collagen, collagen C-propeptides, fibronectin and E-cadherin. It recognizes the proline-hydroxylated sequence G-F-P-G-E-R in collagen. It is responsible for adhesion of platelets and other cells to collagens, modulation of collagen and collagenase gene expression, force generation and organization of newly synthesized extracellular matrix. (Microbial infection) Integrin ITGA2:ITGB1 acts as a receptor for Human rotavirus A. Functionally, (Microbial infection) Integrin ITGA2:ITGB1 acts as a receptor for Human echoviruses 1 and 8. The chain is Integrin alpha-2 (ITGA2) from Homo sapiens (Human).